Reading from the N-terminus, the 208-residue chain is Germin-like protein subfamily 3 member 1 (208 aa).

Residues 1-18 form the signal peptide; sequence MLRTIFLLSLLFALSNAS. Residues cysteine 23 and cysteine 38 are joined by a disulfide bond. Positions 52–198 constitute a Cupin type-1 domain; that stretch reads SGLGTPGNTT…TTFLDATTVK (147 aa). A glycan (N-linked (GlcNAc...) asparagine) is linked at asparagine 59. Positions 100, 102, 107, and 146 each coordinate Mn(2+).

It belongs to the germin family. May not form oligomer. As to expression, expressed during germination, and also in green shoots, etiolated seedlings and whole seedlings.

The protein localises to the secreted. Its subcellular location is the extracellular space. It localises to the apoplast. May play a role in plant defense. Probably has no oxalate oxidase activity even if the active site is conserved. This Arabidopsis thaliana (Mouse-ear cress) protein is Germin-like protein subfamily 3 member 1 (GLP1).